The primary structure comprises 248 residues: Regulator of G-protein signaling 7-binding protein A (248 aa).

Positions 1-32 are disordered; the sequence is MSSAPNGRKNRPRTAGTIFQIGGKAPSRESER. Residues C243 and C244 are each lipidated (S-palmitoyl cysteine).

This sequence belongs to the RGS7BP/RGS9BP family. Palmitoylated. Undergoes rapid palmitoylation turnover. Palmitoylation regulates the cell membrane and nuclear shuttling and the regulation of GPCR signaling. Upon depalmitoylation, it is targeted from the plasma membrane into the nucleus. GPCR signaling inhibits depalmitoylation and promotes localization to the plasma membrane.

It is found in the nucleus. The protein resides in the cytoplasm. The protein localises to the cell membrane. Functionally, regulator of G protein-coupled receptor (GPCR) signaling. Regulatory subunit of the R7-Gbeta5 complexes that acts by controlling the subcellular location of the R7-Gbeta5 complexes. When palmitoylated, it targets the R7-Gbeta5 complexes to the plasma membrane, leading to inhibit G protein alpha subunits. When it is unpalmitoylated, the R7-Gbeta5 complexes undergo a nuclear/cytoplasmic shuttling. The protein is Regulator of G-protein signaling 7-binding protein A (rgs7bpa) of Danio rerio (Zebrafish).